A 952-amino-acid chain; its full sequence is Leucine--tRNA ligase (952 aa).

Residues 65-76 carry the 'HIGH' region motif; that stretch reads PYPSGAGLHVGH. The 'KMSKS' region motif lies at 727 to 731; it reads KMGKS. Lys-730 contributes to the ATP binding site.

The protein belongs to the class-I aminoacyl-tRNA synthetase family.

Its subcellular location is the cytoplasm. The catalysed reaction is tRNA(Leu) + L-leucine + ATP = L-leucyl-tRNA(Leu) + AMP + diphosphate. The sequence is that of Leucine--tRNA ligase from Salinispora arenicola (strain CNS-205).